The following is a 491-amino-acid chain: Ketol-acid reductoisomerase (NADP(+)) (491 aa).

Positions 15–208 (AQLGKCRFMA…GGHRAGVLES (194 aa)) constitute a KARI N-terminal Rossmann domain. Residues 45 to 48 (CGAQ), arginine 68, arginine 76, serine 78, and 108 to 110 (DKQ) each bind NADP(+). Residue histidine 132 is part of the active site. NADP(+) is bound at residue glycine 158. KARI C-terminal knotted domains follow at residues 209–344 (SFVA…NAPQ) and 345–484 (FEGK…MTDM). Positions 217, 221, 389, and 393 each coordinate Mg(2+). A substrate-binding site is contributed by serine 414.

The protein belongs to the ketol-acid reductoisomerase family. The cofactor is Mg(2+).

It catalyses the reaction (2R)-2,3-dihydroxy-3-methylbutanoate + NADP(+) = (2S)-2-acetolactate + NADPH + H(+). It carries out the reaction (2R,3R)-2,3-dihydroxy-3-methylpentanoate + NADP(+) = (S)-2-ethyl-2-hydroxy-3-oxobutanoate + NADPH + H(+). The protein operates within amino-acid biosynthesis; L-isoleucine biosynthesis; L-isoleucine from 2-oxobutanoate: step 2/4. Its pathway is amino-acid biosynthesis; L-valine biosynthesis; L-valine from pyruvate: step 2/4. Involved in the biosynthesis of branched-chain amino acids (BCAA). Catalyzes an alkyl-migration followed by a ketol-acid reduction of (S)-2-acetolactate (S2AL) to yield (R)-2,3-dihydroxy-isovalerate. In the isomerase reaction, S2AL is rearranged via a Mg-dependent methyl migration to produce 3-hydroxy-3-methyl-2-ketobutyrate (HMKB). In the reductase reaction, this 2-ketoacid undergoes a metal-dependent reduction by NADPH to yield (R)-2,3-dihydroxy-isovalerate. The chain is Ketol-acid reductoisomerase (NADP(+)) from Serratia proteamaculans (strain 568).